Reading from the N-terminus, the 581-residue chain is Myoneurin (581 aa).

The 66-residue stretch at 24–89 (CDCTIVIGEF…IYTGTLNLDS (66 aa)) folds into the BTB domain. Residues 167 to 193 (PKQGALAKKSSQTKKKKKAFNSQKTGQ) are disordered. 2 short sequence motifs (nuclear localization signal) span residues 174–190 (KKSSQTKKKKKAFNSQK) and 256–261 (KRKRGK). The residue at position 288 (S288) is a Phosphoserine. 7 consecutive C2H2-type zinc fingers follow at residues 301 to 323 (PMCNTCGKVFSEASSLRRHMRIH), 329 to 351 (YVCHLCGKAFTQCNQLKTHVRTH), 357 to 380 (YKCELCDKGFAQKCQLVFHSRMHH), 386 to 408 (YKCDVCNLQFATSSNLKIHARKH), 414 to 436 (YVCDRCGQRFAQASTLTYHVRRH), 442 to 464 (YVCDTCGKAFAVSSSLITHSRKH), and 470 to 493 (FICELCGNSYTDIKNLKKHKTKVH).

Belongs to the krueppel C2H2-type zinc-finger protein family.

The protein localises to the nucleus. The protein is Myoneurin (MYNN) of Bos taurus (Bovine).